Reading from the N-terminus, the 253-residue chain is Uracil-DNA glycosylase (253 aa).

The Proton acceptor role is filled by Asp-79.

It belongs to the uracil-DNA glycosylase (UDG) superfamily. UNG family.

It localises to the cytoplasm. It carries out the reaction Hydrolyzes single-stranded DNA or mismatched double-stranded DNA and polynucleotides, releasing free uracil.. Functionally, excises uracil residues from the DNA which can arise as a result of misincorporation of dUMP residues by DNA polymerase or due to deamination of cytosine. The sequence is that of Uracil-DNA glycosylase from Xylella fastidiosa (strain 9a5c).